Here is a 104-residue protein sequence, read N- to C-terminus: UPF0235 protein Sfri_2863 (104 aa).

This sequence belongs to the UPF0235 family.

This Shewanella frigidimarina (strain NCIMB 400) protein is UPF0235 protein Sfri_2863.